A 144-amino-acid polypeptide reads, in one-letter code: Deoxyuridine 5'-triphosphate nucleotidohydrolase (144 aa).

Substrate contacts are provided by residues 63–65 (RSG), Asn-76, and 80–82 (TID).

This sequence belongs to the dUTPase family. Requires Mg(2+) as cofactor.

The enzyme catalyses dUTP + H2O = dUMP + diphosphate + H(+). The protein operates within pyrimidine metabolism; dUMP biosynthesis; dUMP from dCTP (dUTP route): step 2/2. In terms of biological role, this enzyme is involved in nucleotide metabolism: it produces dUMP, the immediate precursor of thymidine nucleotides and it decreases the intracellular concentration of dUTP so that uracil cannot be incorporated into DNA. The chain is Deoxyuridine 5'-triphosphate nucleotidohydrolase from Phocaeicola vulgatus (strain ATCC 8482 / DSM 1447 / JCM 5826 / CCUG 4940 / NBRC 14291 / NCTC 11154) (Bacteroides vulgatus).